The primary structure comprises 215 residues: MASATLTAWIKMPSFLKKILKLRGRRQEDESRSRMLSDSSMLSCRVNQLTSEGTEAGSTTPSTLPKDQALLIEPKVRAKEKSQHRRPKIIDQVRRVESLGEQASQRQKHMLETLINKIYTGPLGEELVQTLYLRIWAMEETPESLKILQMREDIRDQVLKMKTERWLRTLIRGEKTKLKDFQKRYEEVHPYLMKEKVEQVIMEEAWSLAAHIVQE.

A disordered region spans residues 12 to 34 (MPSFLKKILKLRGRRQEDESRSR). The involved in self-degradation and in host STAT1 degradation stretch occupies residues 15–22 (FLKKILKL).

The protein belongs to the respirovirus protein C family. In terms of assembly, the different isoforms interact (via C-terminus) with unphosphorylated and phosphorylated human STAT1 (via N-terminus), favoring the formation of parallel STAT1 homodimers. The different isoforms do not interact with host STAT2. C protein interacts with L protein; this interaction has an inhibitory effect on viral transcription and replication. Y1 and Y2 proteins are produced not only by alternative initiation, but also by proteolytic cleavage of C'. Only alternative initiation is detected in vitro, whereas in vivo cleavage seems to be predominant.

It is found in the host cytoplasm. Its subcellular location is the virion. Functionally, the different isoforms prevent the establishment of cellular antiviral state by blocking the interferon-alpha/beta (IFN-alpha/beta) and IFN-gamma signaling pathways. They inhibit IFN-alpha/beta induced tyrosine phosphorylation of STAT1 and STAT2. Blocking the IFN-alpha/beta pathway requires binding to STAT1 in the cytoplasm. They inhibit IFN-gamma induced serine phosphorylation of STAT1. Block the IFN-gamma pathway by binding to and stabilizing the parallel form of the STAT1 dimer, further inducing high-molecular-weight complex (HMWC) formation and inhibition of transcription by IFN-gamma. May also have a role in preventing the cell to enter apoptosis. Modulate regulation of viral transcription and replication. Overexpression inhibits the viral RNA polymerase. The absence of all C', C, Y1 and Y2 proteins leads to viral delayed growth. Plays an important role in virion particles release. Modulates virion shape. This is C' protein (P/V/C) from Sendai virus (strain Z) (SeV).